The primary structure comprises 469 residues: DNA polymerase delta subunit 2 (469 aa).

Position 1 is an N-acetylmethionine (M1). A Phosphoserine modification is found at S257.

Belongs to the DNA polymerase delta/II small subunit family. In terms of assembly, component of both the DNA polymerase delta and DNA polymerase zeta complexes. Component of the tetrameric DNA polymerase delta complex (Pol-delta4), which consists of POLD1/p125, POLD2/p50, POLD3/p66/p68 and POLD4/p12, with POLD1 bearing DNA polymerase and 3' to 5' proofreading exonuclease activities. Within Pol-delta4, directly interacts with POLD1, POLD3 and POLD4. Following stress caused by DNA damaging agents or by replication stress, POLD4 is degraded and Pol-delta4 is converted into a trimeric form of the complex (Pol-delta3), which consists of POLD1, POLD2 and POLD3. Pol-delta3 is the major form occurring at S phase replication sites, as well as DNA damage sites. Also observed as a dimeric complex with POLD2 (Pol-delta2 complex). Pol-delta2 is relatively insensitive to the PCNA stimulation (2-5-fold) compared to Pol-delta4 that is stimulated by over 50-fold. Contrary to the other components of Pol-delta4, does not directly interact with PCNA. As POLD1 and POLD4, directly interacts with WRNIP1; this interaction stimulates DNA polymerase delta-mediated DNA synthesis, independently of the presence of PCNA. This stimulation may be due predominantly to an increase of initiation frequency and also to increased processivity. Directly interacts with POLDIP2 and POLDIP3. Directly interacts with KCTD13/PDIP1; in the presence of PCNA, this interaction may stimulate DNA polymerase activity. Component of the tetrameric Pol-zeta complex (Pol-zeta4), which consists of REV3L, MAD2L2, POLD2 and POLD3, with REV3L bearing DNA polymerase catalytic activity. Interacts with KCTD10.

It is found in the nucleus. Its function is as follows. Accessory component of both the DNA polymerase delta complex and the DNA polymerase zeta complex. As a component of the trimeric and tetrameric DNA polymerase delta complexes (Pol-delta3 and Pol-delta4, respectively), plays a role in high fidelity genome replication, including in lagging strand synthesis, and repair. Pol-delta3 and Pol-delta4 are characterized by the absence or the presence of POLD4. They exhibit differences in catalytic activity. Most notably, Pol-delta3 shows higher proofreading activity than Pol-delta4. Although both Pol-delta3 and Pol-delta4 process Okazaki fragments in vitro, Pol-delta3 may also be better suited to fulfill this task, exhibiting near-absence of strand displacement activity compared to Pol-delta4 and stalling on encounter with the 5'-blocking oligonucleotides. Pol-delta3 idling process may avoid the formation of a gap, while maintaining a nick that can be readily ligated. Along with DNA polymerase kappa, DNA polymerase delta carries out approximately half of nucleotide excision repair (NER) synthesis following UV irradiation. Under conditions of DNA replication stress, required for the repair of broken replication forks through break-induced replication (BIR). Involved in the translesion synthesis (TLS) of templates carrying O6-methylguanine or abasic sites performed by Pol-delta4, independently of DNA polymerase zeta (REV3L) or eta (POLH). Facilitates abasic site bypass by DNA polymerase delta by promoting extension from the nucleotide inserted opposite the lesion. Also involved in TLS as a component of the DNA polymerase zeta complex. Along with POLD3, dramatically increases the efficiency and processivity of DNA synthesis of the DNA polymerase zeta complex compared to the minimal zeta complex, consisting of only REV3L and REV7. The protein is DNA polymerase delta subunit 2 (Pold2) of Mus musculus (Mouse).